Reading from the N-terminus, the 204-residue chain is Pro-glucagon (204 aa).

The signal sequence occupies residues 1 to 20 (MTSMYFVAGLLLMIVQGSWQ). A propeptide spanning residues 84-109 (SGQQGVEEREKENLLDQLSSNGLARH) is cleaved from the precursor. Arg145 carries the arginine amide modification. Propeptides lie at residues 149–161 (DFLE…DDIG) and 197–204 (RDLLGEYQ).

This sequence belongs to the glucagon family. In terms of tissue distribution, isoform LPII is expressed in both pancreas and intestine. Expression of isoform LPI is restricted to the pancreas. Neither isoform is detected in salivary glands.

The protein resides in the secreted. Its function is as follows. Plays a key role in glucose metabolism and homeostasis. Regulates blood glucose by increasing gluconeogenesis and decreasing glycolysis. Potent stimulator of glucose-dependent insulin release. Plays important roles on gastric motility and the suppression of plasma glucagon levels. Functionally, stimulates intestinal growth and up-regulates villus height in the small intestine, concomitant with increased crypt cell proliferation and decreased enterocyte apoptosis. The chain is Pro-glucagon (GCG) from Heloderma suspectum (Gila monster).